We begin with the raw amino-acid sequence, 210 residues long: Somatotropin (210 aa).

An N-terminal signal peptide occupies residues 1–22 (MGQVFLLMPVLLVSCFLSQGAA). His-38 serves as a coordination point for Zn(2+). Cys-71 and Cys-183 are joined by a disulfide. Glu-192 is a binding site for Zn(2+). Cys-200 and Cys-208 are oxidised to a cystine.

Belongs to the somatotropin/prolactin family.

It is found in the secreted. In terms of biological role, growth hormone plays an important role in growth control and is involved in the regulation of several anabolic processes. Implicated as an osmoregulatory substance important for seawater adaptation. This is Somatotropin (gh) from Oncorhynchus keta (Chum salmon).